A 617-amino-acid chain; its full sequence is Dihydroxy-acid dehydratase (617 aa).

A Mg(2+)-binding site is contributed by D81. A [2Fe-2S] cluster-binding site is contributed by C122. 2 residues coordinate Mg(2+): D123 and K124. K124 carries the N6-carboxylysine modification. C195 contacts [2Fe-2S] cluster. A Mg(2+)-binding site is contributed by E492. S518 serves as the catalytic Proton acceptor.

It belongs to the IlvD/Edd family. Homodimer. [2Fe-2S] cluster serves as cofactor. The cofactor is Mg(2+).

The enzyme catalyses (2R)-2,3-dihydroxy-3-methylbutanoate = 3-methyl-2-oxobutanoate + H2O. The catalysed reaction is (2R,3R)-2,3-dihydroxy-3-methylpentanoate = (S)-3-methyl-2-oxopentanoate + H2O. Its pathway is amino-acid biosynthesis; L-isoleucine biosynthesis; L-isoleucine from 2-oxobutanoate: step 3/4. The protein operates within amino-acid biosynthesis; L-valine biosynthesis; L-valine from pyruvate: step 3/4. Its function is as follows. Functions in the biosynthesis of branched-chain amino acids. Catalyzes the dehydration of (2R,3R)-2,3-dihydroxy-3-methylpentanoate (2,3-dihydroxy-3-methylvalerate) into 2-oxo-3-methylpentanoate (2-oxo-3-methylvalerate) and of (2R)-2,3-dihydroxy-3-methylbutanoate (2,3-dihydroxyisovalerate) into 2-oxo-3-methylbutanoate (2-oxoisovalerate), the penultimate precursor to L-isoleucine and L-valine, respectively. The sequence is that of Dihydroxy-acid dehydratase from Buchnera aphidicola subsp. Cinara cedri (strain Cc).